A 316-amino-acid chain; its full sequence is 4-hydroxy-3-methylbut-2-enyl diphosphate reductase (316 aa).

Cys-12 contacts [4Fe-4S] cluster. Residues His-43 and His-81 each contribute to the (2E)-4-hydroxy-3-methylbut-2-enyl diphosphate site. Residues His-43 and His-81 each coordinate dimethylallyl diphosphate. Isopentenyl diphosphate contacts are provided by His-43 and His-81. Cys-103 is a binding site for [4Fe-4S] cluster. Position 131 (His-131) interacts with (2E)-4-hydroxy-3-methylbut-2-enyl diphosphate. A dimethylallyl diphosphate-binding site is contributed by His-131. His-131 is a binding site for isopentenyl diphosphate. Glu-133 functions as the Proton donor in the catalytic mechanism. (2E)-4-hydroxy-3-methylbut-2-enyl diphosphate is bound at residue Thr-170. Residue Cys-198 participates in [4Fe-4S] cluster binding. Positions 226, 228, and 271 each coordinate (2E)-4-hydroxy-3-methylbut-2-enyl diphosphate. 3 residues coordinate dimethylallyl diphosphate: Ser-226, Asn-228, and Ser-271. Residues Ser-226, Asn-228, and Ser-271 each contribute to the isopentenyl diphosphate site.

Belongs to the IspH family. [4Fe-4S] cluster serves as cofactor.

It catalyses the reaction isopentenyl diphosphate + 2 oxidized [2Fe-2S]-[ferredoxin] + H2O = (2E)-4-hydroxy-3-methylbut-2-enyl diphosphate + 2 reduced [2Fe-2S]-[ferredoxin] + 2 H(+). The enzyme catalyses dimethylallyl diphosphate + 2 oxidized [2Fe-2S]-[ferredoxin] + H2O = (2E)-4-hydroxy-3-methylbut-2-enyl diphosphate + 2 reduced [2Fe-2S]-[ferredoxin] + 2 H(+). It participates in isoprenoid biosynthesis; dimethylallyl diphosphate biosynthesis; dimethylallyl diphosphate from (2E)-4-hydroxy-3-methylbutenyl diphosphate: step 1/1. It functions in the pathway isoprenoid biosynthesis; isopentenyl diphosphate biosynthesis via DXP pathway; isopentenyl diphosphate from 1-deoxy-D-xylulose 5-phosphate: step 6/6. Its function is as follows. Catalyzes the conversion of 1-hydroxy-2-methyl-2-(E)-butenyl 4-diphosphate (HMBPP) into a mixture of isopentenyl diphosphate (IPP) and dimethylallyl diphosphate (DMAPP). Acts in the terminal step of the DOXP/MEP pathway for isoprenoid precursor biosynthesis. In Bacillus cereus (strain AH820), this protein is 4-hydroxy-3-methylbut-2-enyl diphosphate reductase.